The following is a 204-amino-acid chain: 8-oxoguanine DNA glycosylase/AP lyase (204 aa).

Active-site residues include K129 and D147.

This sequence belongs to the type-2 OGG1 family.

It carries out the reaction 2'-deoxyribonucleotide-(2'-deoxyribose 5'-phosphate)-2'-deoxyribonucleotide-DNA = a 3'-end 2'-deoxyribonucleotide-(2,3-dehydro-2,3-deoxyribose 5'-phosphate)-DNA + a 5'-end 5'-phospho-2'-deoxyribonucleoside-DNA + H(+). Its function is as follows. Catalyzes the excision of an oxidatively damaged form of guanine (7,8-dihydro-8-oxoguanine = 8-oxoG) from DNA. Also cleaves the DNA backbone at apurinic/apyrimidinic sites (AP sites). The sequence is that of 8-oxoguanine DNA glycosylase/AP lyase from Thermoplasma acidophilum (strain ATCC 25905 / DSM 1728 / JCM 9062 / NBRC 15155 / AMRC-C165).